The chain runs to 190 residues: Imidazoleglycerol-phosphate dehydratase (190 aa).

Belongs to the imidazoleglycerol-phosphate dehydratase family.

It is found in the cytoplasm. It catalyses the reaction D-erythro-1-(imidazol-4-yl)glycerol 3-phosphate = 3-(imidazol-4-yl)-2-oxopropyl phosphate + H2O. Its pathway is amino-acid biosynthesis; L-histidine biosynthesis; L-histidine from 5-phospho-alpha-D-ribose 1-diphosphate: step 6/9. This Campylobacter fetus subsp. fetus (strain 82-40) protein is Imidazoleglycerol-phosphate dehydratase.